The primary structure comprises 72 residues: Inner membrane protein YmgF (72 aa).

At 1–9 (MNNSNNLDY) the chain is on the cytoplasmic side. The chain crosses the membrane as a helical span at residues 10–30 (FTLYIIFSIAFMLITLLVILI). The Periplasmic portion of the chain corresponds to 31–34 (AKPS). A helical membrane pass occupies residues 35-55 (TGLGEVLVTINLLNALVWLAI). The Cytoplasmic portion of the chain corresponds to 56–72 (NLVNRLRERLVNHRDQQ).

In terms of assembly, interacts with FtsL, FtsQ, FtsI, FtsN, and probably many other cell division proteins.

It localises to the cell inner membrane. Its function is as follows. Could be involved in cell division. May participate in the stabilization of the cell divisome under specific conditions. The sequence is that of Inner membrane protein YmgF (ymgF) from Escherichia coli (strain K12).